The sequence spans 419 residues: Subtilisin-like protease 2 (419 aa).

The N-terminal stretch at 1–16 (MQLLNFGLLLLPFVAG) is a signal peptide. The propeptide occupies 17-122 (DLAPQPEPLL…VHPDQHVYLA (106 aa)). In terms of domain architecture, Inhibitor I9 spans 36–122 (QYIVTLKEGL…VHPDQHVYLA (87 aa)). The Peptidase S8 domain occupies 131–419 (RWGLGYMSSK…IQERKFKLPK (289 aa)). Catalysis depends on charge relay system residues aspartate 169 and histidine 201. Residues asparagine 248, asparagine 261, and asparagine 348 are each glycosylated (N-linked (GlcNAc...) asparagine). Residue serine 357 is the Charge relay system of the active site. Residue asparagine 388 is glycosylated (N-linked (GlcNAc...) asparagine).

It belongs to the peptidase S8 family.

The protein resides in the secreted. Secreted subtilisin-like serine protease with keratinolytic activity that contributes to pathogenicity. The chain is Subtilisin-like protease 2 (SUB2) from Arthroderma benhamiae (Trichophyton mentagrophytes).